We begin with the raw amino-acid sequence, 229 residues long: Phosphoglycolate phosphatase (229 aa).

The active-site Nucleophile is Asp13. 3 residues coordinate Mg(2+): Asp13, Asp15, and Asp178.

Belongs to the HAD-like hydrolase superfamily. CbbY/CbbZ/Gph/YieH family. Requires Mg(2+) as cofactor.

It catalyses the reaction 2-phosphoglycolate + H2O = glycolate + phosphate. It functions in the pathway organic acid metabolism; glycolate biosynthesis; glycolate from 2-phosphoglycolate: step 1/1. Its function is as follows. Specifically catalyzes the dephosphorylation of 2-phosphoglycolate. Is involved in the dissimilation of the intracellular 2-phosphoglycolate formed during the DNA repair of 3'-phosphoglycolate ends, a major class of DNA lesions induced by oxidative stress. The protein is Phosphoglycolate phosphatase of Photobacterium profundum (strain SS9).